A 114-amino-acid chain; its full sequence is uncharacterized protein (114 aa).

It to M.kandleri MK0008.

This is an uncharacterized protein from Methanocaldococcus jannaschii (strain ATCC 43067 / DSM 2661 / JAL-1 / JCM 10045 / NBRC 100440) (Methanococcus jannaschii).